A 307-amino-acid chain; its full sequence is Porphobilinogen deaminase (307 aa).

Residue Cys-241 is modified to S-(dipyrrolylmethanemethyl)cysteine.

Belongs to the HMBS family. As to quaternary structure, monomer. Requires dipyrromethane as cofactor.

The catalysed reaction is 4 porphobilinogen + H2O = hydroxymethylbilane + 4 NH4(+). It functions in the pathway porphyrin-containing compound metabolism; protoporphyrin-IX biosynthesis; coproporphyrinogen-III from 5-aminolevulinate: step 2/4. In terms of biological role, tetrapolymerization of the monopyrrole PBG into the hydroxymethylbilane pre-uroporphyrinogen in several discrete steps. This chain is Porphobilinogen deaminase, found in Coxiella burnetii (strain CbuK_Q154) (Coxiella burnetii (strain Q154)).